The chain runs to 364 residues: MSLQSIKYSRGSLEILDQLLLPGQSKYVVVRGVEDGWKVINKMQVRGAPAIAIVGCLSLAVEINPEDFENKKSLRQEIEGKLNYLVSARPTAVNMKIAADELITLANELYKDEAIDVTQMKHRFLDATEAMLKKDIADNRAIGANGAQAILQRVAKAGKTTAGTTGSVRVLTHCNTGSLATAGYGTALGVVRQLAELGKLEHVYCTETRPYNQGARLTAYELVHEKFPATLVLDSMVAALLRAKNVAAVVVGADRVASNGDTANKIGTYQIAVVAKHHDVPFYVAAPLTSIDLAIPGGDHIIIEERPDREMTHVGEHRIAAPGINCWNPAFDVTPASLITGIITERGVFKPAELKEAITKLLES.

D254 (proton donor) is an active-site residue.

The protein belongs to the eIF-2B alpha/beta/delta subunits family. MtnA subfamily.

The protein resides in the cytoplasm. Its subcellular location is the nucleus. It catalyses the reaction 5-(methylsulfanyl)-alpha-D-ribose 1-phosphate = 5-(methylsulfanyl)-D-ribulose 1-phosphate. It functions in the pathway amino-acid biosynthesis; L-methionine biosynthesis via salvage pathway; L-methionine from S-methyl-5-thio-alpha-D-ribose 1-phosphate: step 1/6. Functionally, catalyzes the interconversion of methylthioribose-1-phosphate (MTR-1-P) into methylthioribulose-1-phosphate (MTRu-1-P). This chain is Methylthioribose-1-phosphate isomerase, found in Drosophila sechellia (Fruit fly).